Consider the following 213-residue polypeptide: Phosphatidylserine decarboxylase proenzyme (213 aa).

Catalysis depends on Ser182, which acts as the Schiff-base intermediate with substrate; via pyruvic acid. Residue Ser182 is modified to Pyruvic acid (Ser); by autocatalysis.

The protein belongs to the phosphatidylserine decarboxylase family. PSD-A subfamily. As to quaternary structure, heterodimer of a large membrane-associated beta subunit and a small pyruvoyl-containing alpha subunit. The cofactor is pyruvate. In terms of processing, is synthesized initially as an inactive proenzyme. Formation of the active enzyme involves a self-maturation process in which the active site pyruvoyl group is generated from an internal serine residue via an autocatalytic post-translational modification. Two non-identical subunits are generated from the proenzyme in this reaction, and the pyruvate is formed at the N-terminus of the alpha chain, which is derived from the carboxyl end of the proenzyme. The post-translation cleavage follows an unusual pathway, termed non-hydrolytic serinolysis, in which the side chain hydroxyl group of the serine supplies its oxygen atom to form the C-terminus of the beta chain, while the remainder of the serine residue undergoes an oxidative deamination to produce ammonia and the pyruvoyl prosthetic group on the alpha chain.

The protein localises to the cell membrane. It carries out the reaction a 1,2-diacyl-sn-glycero-3-phospho-L-serine + H(+) = a 1,2-diacyl-sn-glycero-3-phosphoethanolamine + CO2. Its pathway is phospholipid metabolism; phosphatidylethanolamine biosynthesis; phosphatidylethanolamine from CDP-diacylglycerol: step 2/2. Its function is as follows. Catalyzes the formation of phosphatidylethanolamine (PtdEtn) from phosphatidylserine (PtdSer). The protein is Phosphatidylserine decarboxylase proenzyme of Geotalea daltonii (strain DSM 22248 / JCM 15807 / FRC-32) (Geobacter daltonii).